A 702-amino-acid chain; its full sequence is Nucleolar and coiled-body phosphoprotein 1 (702 aa).

Residues 10 to 42 (VPSDLYPLVLRFLRDSQLSEVASKFAKATGATQ) enclose the LisH domain. Lys33 is modified (N6-acetyllysine). The disordered stretch occupies residues 65–635 (PKVKLQSNGP…SPFRRVREEE (571 aa)). Glycyl lysine isopeptide (Lys-Gly) (interchain with G-Cter in SUMO2) cross-links involve residues Lys68 and Lys77. 2 Acidic serine cluster repeats span residues 85–96 (SSDSSEDSSEDE) and 130–141 (ESSSSEESSEEE). Residues 85 to 566 (SSDSSEDSSE…GKAAKESEEE (482 aa)) are 11 X 12 AA approximate repeats of an acidic serine cluster. Ser88 carries the phosphoserine modification. Diphosphoserine occurs at positions 89 and 92. Phosphoserine; by CK2 occurs at positions 89 and 92. At Ser93 the chain carries Phosphoserine. Composition is skewed to low complexity over residues 123–135 (KAAAKASESSSSE) and 151–164 (QQKAAKPQAKAVRP). Over residues 172-188 (SESDSDSDSDSSSEEET) the composition is skewed to acidic residues. An Acidic serine cluster 3 repeat occupies 176 to 187 (SDSDSDSSSEEE). Low complexity-rich tracts occupy residues 189–205 (PQTQKPKAAVAAKAQTK), 224–235 (KAAASSSSSSSS), 245–278 (AAPPKKTVPKKQVVAKAPVKVAAAPTQKSSSSED), and 308–329 (LPKKSPGTQAPKKAAAQTQPAD). Residues Lys195 and Lys201 each participate in a glycyl lysine isopeptide (Lys-Gly) (interchain with G-Cter in SUMO2) cross-link. Positions 215-390 (KAQPKVANGK…EDEAPAKPVS (176 aa)) are interaction with RPA194. Acidic serine cluster repeat units follow at residues 232–241 (SSSSDDSEEE) and 273–284 (SSSSEDSSSEEE). Acidic residues predominate over residues 330 to 342 (SSDDSSDDSDSSS). The stretch at 334–345 (SSDDSDSSSEEE) is one Acidic serine cluster 6 repeat. Glycyl lysine isopeptide (Lys-Gly) (interchain with G-Cter in SUMO2) cross-links involve residues Lys351 and Lys356. The span at 353 to 362 (VVSKTPAKAA) shows a compositional bias: low complexity. Residues Ser371, Ser372, and Ser375 each carry the phosphoserine modification. The stretch at 372 to 383 (SDSSDSDSSEDE) is one Acidic serine cluster 7 repeat. Glycyl lysine isopeptide (Lys-Gly) (interchain with G-Cter in SUMO2) cross-links involve residues Lys396, Lys402, Lys407, and Lys413. Polar residues predominate over residues 411–422 (TPKQPAGSNQKP). N6-acetyllysine; alternate is present on Lys421. Residue Lys421 forms a Glycyl lysine isopeptide (Lys-Gly) (interchain with G-Cter in SUMO1); alternate linkage. Lys421 is covalently cross-linked (Glycyl lysine isopeptide (Lys-Gly) (interchain with G-Cter in SUMO2); alternate). Residues 431-442 (SSEEESSSSEEE) form an Acidic serine cluster 8 repeat. Residues 431–443 (SSEEESSSSEEEE) show a composition bias toward acidic residues. Residues Lys447 and Lys459 each participate in a glycyl lysine isopeptide (Lys-Gly) (interchain with G-Cter in SUMO2) cross-link. 2 stretches are compositionally biased toward low complexity: residues 447-480 (KSATTPKAKVTAKAAPAKQAPQAAGDSSSDSDSS) and 514-525 (KSSSSSSSSSSE). Acidic serine cluster repeat units lie at residues 474-484 (SSDSDSSSSEE) and 521-531 (SSSSEDSSEEE). A compositionally biased stretch (polar residues) spans 541–554 (PKIQASKANGTPAS). Residues 555-566 (LNGKAAKESEEE) form an Acidic serine cluster 11 repeat. Ser563 is modified (phosphoserine). The segment covering 563–572 (SEEEEEEEET) has biased composition (acidic residues). A Glycyl lysine isopeptide (Lys-Gly) (interchain with G-Cter in SUMO1) cross-link involves residue Lys575. Lys582 is covalently cross-linked (Glycyl lysine isopeptide (Lys-Gly) (interchain with G-Cter in SUMO2)). Ser585 carries the post-translational modification Phosphoserine. At Thr594 the chain carries Phosphothreonine. A Glycyl lysine isopeptide (Lys-Gly) (interchain with G-Cter in SUMO2) cross-link involves residue Lys607. Thr610 and Thr613 each carry phosphothreonine. A Glycyl lysine isopeptide (Lys-Gly) (interchain with G-Cter in SUMO2) cross-link involves residue Lys616. Ser625 and Ser646 each carry phosphoserine. Lys650 participates in a covalent cross-link: Glycyl lysine isopeptide (Lys-Gly) (interchain with G-Cter in SUMO2). N6-acetyllysine; alternate is present on Lys666. A Glycyl lysine isopeptide (Lys-Gly) (interchain with G-Cter in SUMO2); alternate cross-link involves residue Lys666. An Omega-N-methylarginine modification is found at Arg686. Phosphoserine is present on Ser689. A Glycyl lysine isopeptide (Lys-Gly) (interchain with G-Cter in SUMO2) cross-link involves residue Lys698. Ser701 carries the post-translational modification Phosphoserine.

The protein belongs to the NOLC1 family. In terms of assembly, interacts with RNA polymerase I 194 kDa subunit (RPA194) and with casein kinase-II. Interacts with DKC1/NAP57, NOP58 and fibrillarin. Post-translationally, undergoes rapid and massive phosphorylation/dephosphorylation cycles on CK2 and PKC sites. NOLC1 is one of the mostly phosphorylated proteins in the cell. In terms of processing, pyrophosphorylated by 5-diphosphoinositol pentakisphosphate (5-IP7). Serine pyrophosphorylation is achieved by Mg(2+)-dependent, but enzyme independent transfer of a beta-phosphate from a inositol pyrophosphate to a pre-phosphorylated serine residue. Ubiquitinated. Monoubiquitination by the BCR(KBTBD8) complex promotes the formation of a NOLC1-TCOF1 complex that acts as a platform to connect RNA polymerase I with enzymes responsible for ribosomal processing and modification, leading to remodel the translational program of differentiating cells in favor of neural crest specification.

Its subcellular location is the nucleus. It is found in the nucleolus. The protein localises to the cytoplasm. Its function is as follows. Nucleolar protein that acts as a regulator of RNA polymerase I by connecting RNA polymerase I with enzymes responsible for ribosomal processing and modification. Required for neural crest specification: following monoubiquitination by the BCR(KBTBD8) complex, associates with TCOF1 and acts as a platform to connect RNA polymerase I with enzymes responsible for ribosomal processing and modification, leading to remodel the translational program of differentiating cells in favor of neural crest specification. Involved in nucleologenesis, possibly by playing a role in the maintenance of the fundamental structure of the fibrillar center and dense fibrillar component in the nucleolus. It has intrinsic GTPase and ATPase activities. The polypeptide is Nucleolar and coiled-body phosphoprotein 1 (Mus musculus (Mouse)).